The chain runs to 543 residues: MTKSNGEEPRMGSRMERFQQGVRKRTLLAKKKVQNITKEDVKSYLFRNAFVLLTVSAVIVGTILGFALRPYKMSYREVKYFSFPGELLMRMLQMLVLPLIISSLVTGMAALDSKASGKMGMRAVVYYMTTTIIAVVIGIIIVIIIHPGKGTKENMYREGKIVQVTAADAFLDLIRNMFPPNLVEACFKQFKTSYEKRSFKVPIQANETLLGAVINNVSEAMETLTRIREEMVPVPGSVNGVNALGLVVFSMCFGFVIGNMKEQGQALREFFDSLNEAIMRLVAVIMWYAPLGILFLIAGKILEMEDMGVIGGQLAMYTVTVIVGLLIHAVIVLPLLYFLVTRKNPWVFIGGLLQALITALGTSSSSATLPITFKCLEENNGVDKRITRFVLPVGATINMDGTALYEALAAIFIAQVNNFDLNFGQIITISITATAASIGAAGIPQAGLVTMVIVLTSVGLPTDDITLIIAVDWFLDRLRTTTNVLGDSLGAGIVEHLSRHELKNRDVEMGNSVIEENEMKKPYQLIAQDNEPEKPVADSETKM.

Residues 1 to 47 lie on the Cytoplasmic side of the membrane; it reads MTKSNGEEPRMGSRMERFQQGVRKRTLLAKKKVQNITKEDVKSYLFR. The chain crosses the membrane as a helical span at residues 48–68; sequence NAFVLLTVSAVIVGTILGFAL. Residues 69–86 are Extracellular-facing; the sequence is RPYKMSYREVKYFSFPGE. The helical transmembrane segment at 87–108 threads the bilayer; the sequence is LLMRMLQMLVLPLIISSLVTGM. The Cytoplasmic portion of the chain corresponds to 109–122; that stretch reads AALDSKASGKMGMR. The helical transmembrane segment at 123-145 threads the bilayer; that stretch reads AVVYYMTTTIIAVVIGIIIVIII. At 146–236 the chain is on the extracellular side; it reads HPGKGTKENM…IREEMVPVPG (91 aa). The chain crosses the membrane as a helical span at residues 237 to 260; that stretch reads SVNGVNALGLVVFSMCFGFVIGNM. The Cytoplasmic portion of the chain corresponds to 261 to 269; it reads KEQGQALRE. A helical membrane pass occupies residues 270–297; that stretch reads FFDSLNEAIMRLVAVIMWYAPLGILFLI. Residues 298 to 318 lie on the Extracellular side of the membrane; sequence AGKILEMEDMGVIGGQLAMYT. Residues 319-340 form a helical membrane-spanning segment; sequence VTVIVGLLIHAVIVLPLLYFLV. Residues 341–345 are Cytoplasmic-facing; it reads TRKNP. The segment at residues 346–376 is an intramembrane region (discontinuously helical); sequence WVFIGGLLQALITALGTSSSSATLPITFKCL. 363 to 365 is a binding site for L-aspartate; that stretch reads SSS. Residues 377–385 lie on the Cytoplasmic side of the membrane; the sequence is EENNGVDKR. Residues 386–412 form a helical membrane-spanning segment; it reads ITRFVLPVGATINMDGTALYEALAAIF. The Na(+) site is built by G394, T396, and N398. T402 is an L-aspartate binding site. Residues 413 to 425 lie on the Extracellular side of the membrane; it reads IAQVNNFDLNFGQ. An intramembrane region (discontinuously helical) is located at residues 426 to 459; sequence IITISITATAASIGAAGIPQAGLVTMVIVLTSVG. L-aspartate is bound at residue 443-447; that stretch reads IPQAG. Over 460–472 the chain is Extracellular; it reads LPTDDITLIIAVD. The helical transmembrane segment at 473 to 494 threads the bilayer; that stretch reads WFLDRLRTTTNVLGDSLGAGIV. L-aspartate contacts are provided by D476 and N483. The Na(+) site is built by N483 and D487. Residues 495-543 lie on the Cytoplasmic side of the membrane; that stretch reads EHLSRHELKNRDVEMGNSVIEENEMKKPYQLIAQDNEPEKPVADSETKM. S512 carries the post-translational modification Phosphoserine. A disordered region spans residues 522–543; the sequence is PYQLIAQDNEPEKPVADSETKM. Over residues 531 to 543 the composition is skewed to basic and acidic residues; it reads EPEKPVADSETKM.

This sequence belongs to the dicarboxylate/amino acid:cation symporter (DAACS) (TC 2.A.23) family. SLC1A3 subfamily. Homotrimer. Glycosylated. Detected in brain and cerebellum. Both isoform GLAST-1 and GLAST-1A are expressed in bone and brain. In brain isoform GLAST-1 is highly enriched in the Purkinje cell layer in cerebellum.

Its subcellular location is the cell membrane. It carries out the reaction K(+)(in) + L-glutamate(out) + 3 Na(+)(out) + H(+)(out) = K(+)(out) + L-glutamate(in) + 3 Na(+)(in) + H(+)(in). The catalysed reaction is K(+)(in) + L-aspartate(out) + 3 Na(+)(out) + H(+)(out) = K(+)(out) + L-aspartate(in) + 3 Na(+)(in) + H(+)(in). The enzyme catalyses D-aspartate(out) + K(+)(in) + 3 Na(+)(out) + H(+)(out) = D-aspartate(in) + K(+)(out) + 3 Na(+)(in) + H(+)(in). Sodium-dependent, high-affinity amino acid transporter that mediates the uptake of L-glutamate and also L-aspartate and D-aspartate. Functions as a symporter that transports one amino acid molecule together with two or three Na(+) ions and one proton, in parallel with the counter-transport of one K(+) ion. Plays a redundant role in the rapid removal of released glutamate from the synaptic cleft, which is essential for terminating the postsynaptic action of glutamate. The sequence is that of Excitatory amino acid transporter 1 (Slc1a3) from Rattus norvegicus (Rat).